Here is a 700-residue protein sequence, read N- to C-terminus: mRNA cap guanine-N(7) methyltransferase (700 aa).

Basic and acidic residues-rich tracts occupy residues Met-1–Asp-10 and Glu-52–Arg-67. 2 disordered regions span residues Met-1–Arg-263 and Ala-277–Lys-392. Residues Arg-113–Leu-128 show a composition bias toward polar residues. 2 stretches are compositionally biased toward low complexity: residues Pro-129–Pro-144 and Pro-220–His-241. One can recognise an mRNA cap 0 methyltransferase domain in the interval Ser-429 to Met-700. Asn-438–Asn-439 contributes to the mRNA binding site. Positions 442, 461, 483, 512, 538, and 543 each coordinate S-adenosyl-L-methionine.

It belongs to the class I-like SAM-binding methyltransferase superfamily. mRNA cap 0 methyltransferase family.

It localises to the nucleus. The catalysed reaction is a 5'-end (5'-triphosphoguanosine)-ribonucleoside in mRNA + S-adenosyl-L-methionine = a 5'-end (N(7)-methyl 5'-triphosphoguanosine)-ribonucleoside in mRNA + S-adenosyl-L-homocysteine. In terms of biological role, responsible for methylating the 5'-cap structure of mRNAs. The sequence is that of mRNA cap guanine-N(7) methyltransferase (ABD1) from Cryptococcus neoformans var. neoformans serotype D (strain B-3501A) (Filobasidiella neoformans).